We begin with the raw amino-acid sequence, 224 residues long: Small ribosomal subunit protein uS3 (224 aa).

Residues 39–107 form the KH type-2 domain; that stretch reads IREFLKKKPS…DVWVEIAEVK (69 aa).

It belongs to the universal ribosomal protein uS3 family. Part of the 30S ribosomal subunit. Forms a tight complex with proteins S10 and S14.

In terms of biological role, binds the lower part of the 30S subunit head. Binds mRNA in the 70S ribosome, positioning it for translation. This is Small ribosomal subunit protein uS3 from Chlamydia muridarum (strain MoPn / Nigg).